The following is a 920-amino-acid chain: MATTVKVLAKELKRTAPDLLEQLKAAGIEKGSEDDSITEKDKTVLLEHLQKEHGSAETGARKKITLIKRENSEIRQADSAGRTRTVQVEVRKKRVLVKRSDEAAALEVEEAPAKVIAPTEPVKSILSAEELEKRAAEATRQAELLARQEAEMKAAEEARQKEVAAPVVEKEEKPVDNAPDAAATAAEKKATADKAAKDLAATKEKELADIRVRRAAAEAEALAIRDMMSAPARVLKAPSEIAAEEAKKGTLHKPAKPEGADDKKKAVAKVGGKTIKSAETSSTWQEEGAKKPGGLKTRGDSSGGVGGWRSGGGRKKQRQIAEANVDTNFQVPTEPVVRDVHVPETITVAELAHAMAVKSAEVIKLLMGMGQMVTINQVLDQDTAMIIVEEMGHTAHAAKLDDPDLDLGTDGHDAELLPRPPVVTVMGHVDHGKTSLLDKIRAAKVATGEAGGITQHIGAYHVETPRGMITFLDTPGHEAFTAMRARGAKATDIVILVVAADDGVMPQTKEAIHHALAGGVPIVVAINKIDKPEANSERVKTELVAEQVVPEEYGGDVPFIPVSAKTGEGIDALLENVLLQAEILELKAAKDAPAQGLVIEARLDKGKGPVATILVQSGTLKRGDMLLAGSTYGRVRAMLDENGKPCNEAGPSIPVEIQGLGDVPAAGESVQVVPDERKAREIALFRQGKFRDVKLAKQQAFKLETMMENMEEGAVEAKLLPVIIKADVQGSQEALAQSLMKLSTPEVKVQIVHAGVGGITETDVNLAVASKAVIFGFNSRADAAARKLAENNGVDIRYHNIIYDAVDEVKLALSGMLTPDKKEEITGLVEIRQVFLVSKVGAIAGCLVVDGIVKRTSSVRLLRDNVVIWTGELDSLKRFKDDAKEVRAGVECGLSLKGYNDIKEGDQLEVFEVTEVARSL.

Composition is skewed to basic and acidic residues over residues 149-175 (EAEM…EKPV), 186-197 (AEKKATADKAAK), and 255-265 (AKPEGADDKKK). Disordered stretches follow at residues 149–197 (EAEM…KAAK) and 245–319 (EAKK…KQRQ). Over residues 301 to 311 (SSGGVGGWRSG) the composition is skewed to gly residues. The tr-type G domain occupies 418 to 585 (PRPPVVTVMG…NVLLQAEILE (168 aa)). The tract at residues 427–434 (GHVDHGKT) is G1. GTP is bound at residue 427–434 (GHVDHGKT). The tract at residues 452–456 (GITQH) is G2. The G3 stretch occupies residues 473 to 476 (DTPG). GTP-binding positions include 473–477 (DTPGH) and 527–530 (NKID). The segment at 527-530 (NKID) is G4. Positions 563-565 (SAK) are G5.

This sequence belongs to the TRAFAC class translation factor GTPase superfamily. Classic translation factor GTPase family. IF-2 subfamily.

The protein localises to the cytoplasm. Functionally, one of the essential components for the initiation of protein synthesis. Protects formylmethionyl-tRNA from spontaneous hydrolysis and promotes its binding to the 30S ribosomal subunits. Also involved in the hydrolysis of GTP during the formation of the 70S ribosomal complex. The sequence is that of Translation initiation factor IF-2 from Polynucleobacter asymbioticus (strain DSM 18221 / CIP 109841 / QLW-P1DMWA-1) (Polynucleobacter necessarius subsp. asymbioticus).